Here is a 500-residue protein sequence, read N- to C-terminus: Probable cytosol aminopeptidase (500 aa).

Residues Lys264 and Asp269 each coordinate Mn(2+). Residue Lys276 is part of the active site. Residues Asp287, Asp346, and Glu348 each contribute to the Mn(2+) site. Residue Arg350 is part of the active site.

This sequence belongs to the peptidase M17 family. Mn(2+) serves as cofactor.

Its subcellular location is the cytoplasm. It carries out the reaction Release of an N-terminal amino acid, Xaa-|-Yaa-, in which Xaa is preferably Leu, but may be other amino acids including Pro although not Arg or Lys, and Yaa may be Pro. Amino acid amides and methyl esters are also readily hydrolyzed, but rates on arylamides are exceedingly low.. The catalysed reaction is Release of an N-terminal amino acid, preferentially leucine, but not glutamic or aspartic acids.. Presumably involved in the processing and regular turnover of intracellular proteins. Catalyzes the removal of unsubstituted N-terminal amino acids from various peptides. This Chlamydia felis (strain Fe/C-56) (Chlamydophila felis) protein is Probable cytosol aminopeptidase.